Reading from the N-terminus, the 162-residue chain is Nucleotide-binding protein Anae109_0095 (162 aa).

Belongs to the YajQ family.

Functionally, nucleotide-binding protein. The protein is Nucleotide-binding protein Anae109_0095 of Anaeromyxobacter sp. (strain Fw109-5).